Reading from the N-terminus, the 261-residue chain is Methyl-coenzyme M reductase subunit gamma (261 aa).

A coenzyme M-binding site is contributed by arginine 123.

Belongs to the methyl-coenzyme M reductase gamma subunit family. As to quaternary structure, MCR is a hexamer of two alpha, two beta, and two gamma chains, forming a dimer of heterotrimers. It depends on coenzyme F430 as a cofactor.

It localises to the cytoplasm. The catalysed reaction is coenzyme B + methyl-coenzyme M = methane + coenzyme M-coenzyme B heterodisulfide. Its pathway is one-carbon metabolism; methyl-coenzyme M reduction; methane from methyl-coenzyme M: step 1/1. Component of the methyl-coenzyme M reductase (MCR) I that catalyzes the reductive cleavage of methyl-coenzyme M (CoM-S-CH3 or 2-(methylthio)ethanesulfonate) using coenzyme B (CoB or 7-mercaptoheptanoylthreonine phosphate) as reductant which results in the production of methane and the mixed heterodisulfide of CoB and CoM (CoM-S-S-CoB). This is the final step in methanogenesis. In Methanococcus voltae, this protein is Methyl-coenzyme M reductase subunit gamma (mcrG).